A 714-amino-acid polypeptide reads, in one-letter code: Protein HAPLESS 2-B (714 aa).

An N-terminal signal peptide occupies residues 1–33; the sequence is MAPRRRRRAARSSRPLLLALLAAAVNNFAPAGG. The Extracellular segment spans residues 34–552; sequence VEVLAKSRLE…FFTGTTCSTR (519 aa). Disulfide bonds link cysteine 45/cysteine 59, cysteine 134/cysteine 164, cysteine 146/cysteine 194, cysteine 165/cysteine 321, cysteine 167/cysteine 177, cysteine 304/cysteine 328, and cysteine 441/cysteine 479. Residues 553–573 traverse the membrane as a helical segment; sequence CWSFLKFVIHGLLLVAVLWLL. Over 574–714 the chain is Cytoplasmic; it reads HRKGLFDPLY…HGDRRHHAWH (141 aa). The interval 597–619 is disordered; sequence RARRRHKRAHSHRHSHHHDAHKR. Residues 598–619 show a composition bias toward basic residues; that stretch reads ARRRHKRAHSHRHSHHHDAHKR.

It belongs to the HAP2/GCS1 family.

It is found in the endoplasmic reticulum membrane. The protein resides in the cell membrane. Required for male fertility. Plays a role in pollen tube guidance and successful gamete attachment. Essential for the fusion of gametes during double fertilization, where one male gamete fuses with the egg to produce a zygote, and another male gamete fuses with the central cell to produce the endosperm. Mediates the fusion of cell membranes. Not required for pollen tube outgrowth. The protein is Protein HAPLESS 2-B (HAP2B) of Oryza sativa subsp. japonica (Rice).